The primary structure comprises 263 residues: Protein PYRICULARIA ORYZAE RESISTANCE 21 (263 aa).

The region spanning 1-68 is the HMA domain; the sequence is MGILVISVDL…IWCKAGKIIK (68 aa). A metal cation contacts are provided by Cys-12 and Cys-15. The disordered stretch occupies residues 126-153; it reads CEKPKPCEKPPPCKPEEPPKPPPEKPPP. Basic and acidic residues predominate over residues 139-153; it reads KPEEPPKPPPEKPPP.

Functionally, involved in defense responses. Contributes to slowing defense responses toward Magnaporthe oryzae. This chain is Protein PYRICULARIA ORYZAE RESISTANCE 21, found in Oryza sativa subsp. indica (Rice).